Consider the following 870-residue polypeptide: Serine protease DegP homolog (870 aa).

Residues 1 to 29 (MDIIFCTPTYCKIMLMIIMLISLRTRCDT) form the signal peptide. Positions 128–151 (KNPLNDNFKNPKLRKHSPNNKKNK) are disordered. A compositionally biased stretch (basic residues) spans 138–151 (PKLRKHSPNNKKNK). Active-site charge relay system residues include histidine 328, aspartate 359, and serine 437.

This sequence belongs to the peptidase S1C family. As to quaternary structure, oligomer; may form trimers or hexamers. Forms a complex at least composed of DegP, ENO and HSP70.

The protein resides in the cytoplasm. It is found in the parasitophorous vacuole. Its subcellular location is the host cell membrane. The protein localises to the host cytoplasm. Functionally, serine protease which also acts as a protein chaperone. Plays a role in the parasite development in host erythrocytes possibly by protecting it against thermal and oxidative stresses. This is Serine protease DegP homolog from Plasmodium falciparum (isolate 3D7).